A 180-amino-acid chain; its full sequence is Interleukin-17B (180 aa).

Residues 1 to 22 (MDWPHSLLFLLAISIFLAPSHP) form the signal peptide. The tract at residues 22–44 (PRNTKGKRKGQGRPSPLAPGPHQ) is disordered. Residues 23-32 (RNTKGKRKGQ) are compositionally biased toward basic residues. An N-linked (GlcNAc...) asparagine glycan is attached at asparagine 75. Cystine bridges form between cysteine 121–cysteine 176 and cysteine 126–cysteine 178.

The protein belongs to the IL-17 family.

Its subcellular location is the secreted. Functionally, stimulates the release of tumor necrosis factor alpha and IL-1-beta from the monocytic cell line THP-1. The protein is Interleukin-17B (Il17b) of Mus musculus (Mouse).